Consider the following 266-residue polypeptide: Glucosamine-6-phosphate deaminase (266 aa).

D72 acts as the Proton acceptor; for enolization step in catalysis. The For ring-opening step role is filled by D141. The active-site Proton acceptor; for ring-opening step is the H143. E148 (for ring-opening step) is an active-site residue.

This sequence belongs to the glucosamine/galactosamine-6-phosphate isomerase family. NagB subfamily. Homohexamer.

It carries out the reaction alpha-D-glucosamine 6-phosphate + H2O = beta-D-fructose 6-phosphate + NH4(+). It functions in the pathway amino-sugar metabolism; N-acetylneuraminate degradation; D-fructose 6-phosphate from N-acetylneuraminate: step 5/5. With respect to regulation, allosterically activated by N-acetylglucosamine 6-phosphate (GlcNAc6P). Functionally, catalyzes the reversible isomerization-deamination of glucosamine 6-phosphate (GlcN6P) to form fructose 6-phosphate (Fru6P) and ammonium ion. This Vibrio vulnificus (strain CMCP6) protein is Glucosamine-6-phosphate deaminase.